A 494-amino-acid chain; its full sequence is Glutamate decarboxylase 5 (494 aa).

Lysine 276 bears the N6-(pyridoxal phosphate)lysine mark.

The protein belongs to the group II decarboxylase family. In terms of assembly, homohexamer. Interacts with calmodulin. Pyridoxal 5'-phosphate is required as a cofactor. Expressed in flowers.

The enzyme catalyses L-glutamate + H(+) = 4-aminobutanoate + CO2. Its function is as follows. Catalyzes the production of GABA. The calmodulin-binding is calcium-dependent and it is proposed that this may, directly or indirectly, form a calcium regulated control of GABA biosynthesis. The sequence is that of Glutamate decarboxylase 5 (GAD5) from Arabidopsis thaliana (Mouse-ear cress).